Consider the following 1374-residue polypeptide: DNA-directed RNA polymerase subunit beta (1374 aa).

It belongs to the RNA polymerase beta chain family. As to quaternary structure, the RNAP catalytic core consists of 2 alpha, 1 beta, 1 beta' and 1 omega subunit. When a sigma factor is associated with the core the holoenzyme is formed, which can initiate transcription.

It catalyses the reaction RNA(n) + a ribonucleoside 5'-triphosphate = RNA(n+1) + diphosphate. In terms of biological role, DNA-dependent RNA polymerase catalyzes the transcription of DNA into RNA using the four ribonucleoside triphosphates as substrates. This chain is DNA-directed RNA polymerase subunit beta, found in Acidovorax sp. (strain JS42).